The primary structure comprises 271 residues: Type III pantothenate kinase (271 aa).

6–13 is an ATP binding site; it reads DVRNTNIV. Residue 109-112 coordinates substrate; the sequence is GADR. Residue Asp111 is the Proton acceptor of the active site. Asp131 lines the K(+) pocket. Thr134 contacts ATP. Position 186 (Thr186) interacts with substrate.

The protein belongs to the type III pantothenate kinase family. Homodimer. NH4(+) serves as cofactor. Requires K(+) as cofactor.

The protein localises to the cytoplasm. It carries out the reaction (R)-pantothenate + ATP = (R)-4'-phosphopantothenate + ADP + H(+). It participates in cofactor biosynthesis; coenzyme A biosynthesis; CoA from (R)-pantothenate: step 1/5. Functionally, catalyzes the phosphorylation of pantothenate (Pan), the first step in CoA biosynthesis. In Rhodococcus jostii (strain RHA1), this protein is Type III pantothenate kinase.